Consider the following 331-residue polypeptide: Probable allantoicase (331 aa).

It belongs to the allantoicase family.

It carries out the reaction allantoate + H2O = (S)-ureidoglycolate + urea. Its pathway is nitrogen metabolism; (S)-allantoin degradation; (S)-ureidoglycolate from allantoate (aminidohydrolase route): step 1/1. This chain is Probable allantoicase, found in Pseudomonas syringae pv. tomato (strain ATCC BAA-871 / DC3000).